We begin with the raw amino-acid sequence, 27 residues long: Zinc metalloproteinase multactivase catalytic subunit (27 aa).

Residues 12 to 27 (FIELVIIVDHSXXTYK) enclose the Peptidase M12B domain. Glu14 is a binding site for Ca(2+).

The protein belongs to the venom metalloproteinase (M12B) family. P-III subfamily. P-IIId sub-subfamily. As to quaternary structure, heterodimer of a metalloproteinase subunit and a regulatory subunit comprising two homologous disulfide-linked lectins (AC P81798). Zn(2+) is required as a cofactor. Expressed by the venom gland.

It localises to the secreted. Functionally, this carinactivase-like calcium-dependent prothrombin (F2) activator activates prothrombin via recognition of the calcium ion bound conformation of its gamma-carboxyglutamic acid (GLA) domain, and the subsequent conversion of prothrombin to active thrombin is catalyzed by the catalytic subunit. The sequence is that of Zinc metalloproteinase multactivase catalytic subunit from Echis multisquamatus (Central Asian sand viper).